Here is a 364-residue protein sequence, read N- to C-terminus: GDSL esterase/lipase EXL3 (364 aa).

The N-terminal stretch at 1–32 (MKDNSSWSCSCSWSSWKICLLSVLFLTETITA) is a signal peptide. Ser50 serves as the catalytic Nucleophile. Active-site residues include Asp339 and His342.

It belongs to the 'GDSL' lipolytic enzyme family. In terms of tissue distribution, flower buds.

It localises to the secreted. The chain is GDSL esterase/lipase EXL3 (EXL3) from Arabidopsis thaliana (Mouse-ear cress).